A 532-amino-acid chain; its full sequence is Putative F-box/LRR-repeat protein At3g42770 (532 aa).

One can recognise an F-box domain in the interval M1–S46. 3 LRR repeats span residues V113 to S135, I279 to M305, and M398 to L420.

The protein is Putative F-box/LRR-repeat protein At3g42770 of Arabidopsis thaliana (Mouse-ear cress).